The primary structure comprises 160 residues: SsrA-binding protein (160 aa).

The protein belongs to the SmpB family.

It is found in the cytoplasm. Required for rescue of stalled ribosomes mediated by trans-translation. Binds to transfer-messenger RNA (tmRNA), required for stable association of tmRNA with ribosomes. tmRNA and SmpB together mimic tRNA shape, replacing the anticodon stem-loop with SmpB. tmRNA is encoded by the ssrA gene; the 2 termini fold to resemble tRNA(Ala) and it encodes a 'tag peptide', a short internal open reading frame. During trans-translation Ala-aminoacylated tmRNA acts like a tRNA, entering the A-site of stalled ribosomes, displacing the stalled mRNA. The ribosome then switches to translate the ORF on the tmRNA; the nascent peptide is terminated with the 'tag peptide' encoded by the tmRNA and targeted for degradation. The ribosome is freed to recommence translation, which seems to be the essential function of trans-translation. The chain is SsrA-binding protein from Novosphingobium aromaticivorans (strain ATCC 700278 / DSM 12444 / CCUG 56034 / CIP 105152 / NBRC 16084 / F199).